A 551-amino-acid chain; its full sequence is Seventh homolog of septin 1 (551 aa).

Ser2 bears the N-acetylserine mark. In terms of domain architecture, Septin-type G spans 20-339 (RGITYTMLLC…ENYRSEKLSS (320 aa)). The G1 motif stretch occupies residues 30–37 (GPAGTGKT). GTP is bound by residues 30 to 37 (GPAGTGKT), Gly138, 218 to 226 (RADSFTKEE), and Arg288. The G3 motif stretch occupies residues 135–138 (MTHG). A G4 motif region spans residues 217-220 (TRAD). Residues 381–417 (NLRADTPRNQVSGNFKENEYEDNGEHDSAENEQEMSP) form a disordered region. A Phosphotyrosine modification is found at Tyr400. A phosphoserine mark is found at Ser408 and Ser416. Positions 418–518 (VRQLGREIKQ…KLINQNKLNG (101 aa)) form a coiled coil. Residues Lys426 and Lys437 each participate in a glycyl lysine isopeptide (Lys-Gly) (interchain with G-Cter in SUMO) cross-link. Phosphoserine is present on residues Ser447, Ser460, Ser519, Ser520, Ser522, and Ser525. Positions 515–551 (KLNGSSSSINSLQQSTRSQIKKNDTYTDLASIASGRD) are disordered. The segment covering 519 to 532 (SSSSINSLQQSTRS) has biased composition (low complexity). Thr539 carries the post-translational modification Phosphothreonine. 2 positions are modified to phosphoserine: Ser545 and Ser548.

It belongs to the TRAFAC class TrmE-Era-EngA-EngB-Septin-like GTPase superfamily. Septin GTPase family. Component of the septin complex which consists of CDC3, CDC10, CDC11, CDC12 and probably SHS1 and rearranges to a cortical collar of highly ordered filaments at the mother-bud-neck. A complex formed by CDC3, CDC10, CDC11 and CDC12 is capable of forming long filaments in vitro and the components seem to be present in a 2:2:2:2 arrangement in vivo. The filaments are proposed to be formed by the end-to-end polymerization of CDC3-CDC12-CDC11 complexes with CDC10 serving as a bridge to bundle the polymers into paired filaments. Component of the GIN4 complex composed of at least BNI5, CDC3, CDC10, CDC11, CDC12, GIN4, NAP1 and SHS1. Self-associates. Interacts with CDC11 and SPA2. Post-translationally, phosphorylated by GIN4 and CLA4. Phosphorylation state is essential for septin ring dynamics during telophase. Sumoylated during mitosis on the mother cell side of the bud neck. Sumoylation probably plays a central role in regulating septin ring disassembly during the cell cycle.

Its subcellular location is the membrane. It is found in the bud neck. In terms of biological role, septins are GTPases involved in cytokinesis that assemble early in the cell cycle as a patch at the incipient bud site and form a ring approximately 15 minutes before bud emergence, which transforms into an hour-glass shaped collar of cortical filaments that spans both sides of the mother-bud neck. This collar persists until just before cytokinesis, when it splits into two rings that occupy opposite sides of the neck. The septins at the bud neck serve as a structural scaffold that recruits different components involved in diverse processes at specific stages during the cell cycle. Many proteins bind asymmetrically to the septin collar. The septin assembly is regulated by protein kinases GIN4 and/or CLA4. May act by recruiting MYO1 and HOF1, a protein involved in septation, to the site of cleavage. Septins are also involved in cell morphogenesis, bud site selection, chitin deposition, cell cycle regulation, cell compartmentalization and spore wall formation. CDCd11 with SHS1 11 are involved in the recruitment of BNI5 and thereby ensure efficient localization at the bud neck of MYO1, the type II myosin of the actomyosin contractile ring. This is Seventh homolog of septin 1 from Saccharomyces cerevisiae (strain ATCC 204508 / S288c) (Baker's yeast).